Reading from the N-terminus, the 569-residue chain is Urease subunit alpha (569 aa).

A Urease domain is found at 131–569 (GSIDTHIHFI…VPMAQRYFLL (439 aa)). 3 residues coordinate Ni(2+): histidine 136, histidine 138, and lysine 219. Residue lysine 219 is modified to N6-carboxylysine. Residue histidine 221 participates in substrate binding. Ni(2+) contacts are provided by histidine 248 and histidine 274. The active-site Proton donor is the histidine 322. Aspartate 362 provides a ligand contact to Ni(2+).

The protein belongs to the metallo-dependent hydrolases superfamily. Urease alpha subunit family. In terms of assembly, heterotrimer of UreA (gamma), UreB (beta) and UreC (alpha) subunits. Three heterotrimers associate to form the active enzyme. It depends on Ni cation as a cofactor. Carboxylation allows a single lysine to coordinate two nickel ions.

The protein resides in the cytoplasm. The enzyme catalyses urea + 2 H2O + H(+) = hydrogencarbonate + 2 NH4(+). Its pathway is nitrogen metabolism; urea degradation; CO(2) and NH(3) from urea (urease route): step 1/1. The polypeptide is Urease subunit alpha (Prochlorococcus marinus (strain MIT 9215)).